The sequence spans 240 residues: ATP-dependent dethiobiotin synthetase BioD 1 (240 aa).

13-18 (DVGKTV) is a binding site for ATP. Thr-17 serves as a coordination point for Mg(2+). The active site involves Lys-38. Position 42 (Ser-42) interacts with substrate. Residues Asp-55, 116 to 119 (EGAG), 176 to 177 (NE), 205 to 207 (PYL), and Glu-212 each bind ATP. Mg(2+) is bound by residues Asp-55 and Glu-116.

The protein belongs to the dethiobiotin synthetase family. As to quaternary structure, homodimer. Mg(2+) serves as cofactor.

The protein localises to the cytoplasm. It carries out the reaction (7R,8S)-7,8-diammoniononanoate + CO2 + ATP = (4R,5S)-dethiobiotin + ADP + phosphate + 3 H(+). It participates in cofactor biosynthesis; biotin biosynthesis; biotin from 7,8-diaminononanoate: step 1/2. Functionally, catalyzes a mechanistically unusual reaction, the ATP-dependent insertion of CO2 between the N7 and N8 nitrogen atoms of 7,8-diaminopelargonic acid (DAPA, also called 7,8-diammoniononanoate) to form a ureido ring. This chain is ATP-dependent dethiobiotin synthetase BioD 1, found in Yersinia pestis.